A 740-amino-acid chain; its full sequence is Protein SIEVE ELEMENT OCCLUSION B (740 aa).

Residues 1 to 23 (MESLIKSQHAQQLAGHKNTTGKT) show a composition bias toward polar residues. The segment at 1–27 (MESLIKSQHAQQLAGHKNTTGKTPSME) is disordered.

As to quaternary structure, can form homodimer. As to expression, expressed in phloem sieve elements.

Its function is as follows. Scaffold protein required to form the phloem filament matrix in sieve elements. In Arabidopsis thaliana (Mouse-ear cress), this protein is Protein SIEVE ELEMENT OCCLUSION B.